We begin with the raw amino-acid sequence, 407 residues long: MEIILGVAMFTGIVMVLVLLILFAKSRLVNTGDIAVEVNGDLDKSFTAPAGDKLLNMLSSQGIFVSSACGGGGSCGQCRVVIKEGGGDILPTELSHINKREAKEGCRLACQVNVKQNLKIELPEEIFGVKKWECEVISNDNKATFIKELKLKIPDGEDVPFRAGGFIQIEAPAHDISYADFDVPDEYRGDWDKFNLFRYRSVVNETTVRAYSMANYPDEKGIIMLNVRIATPPPRDPDVPPGIMSSYIWSLKAGDKVTISGPFGEFFAKDTDAEMIFIGGGAGMAPMRSHIFDQLNRLKSKRKITFWYGARSLREMFYEEDFNQLQAENENFTWHVALSDPQPEDNWTGYTGFIHNVLLENYLRNHPAPEDCEFYMCGPPMMNAAVIKMLKDLGVEDENIMLDDFGG.

The helical transmembrane segment at 3–23 (IILGVAMFTGIVMVLVLLILF) threads the bilayer. The 95-residue stretch at 32-126 (GDIAVEVNGD…NLKIELPEEI (95 aa)) folds into the 2Fe-2S ferredoxin-type domain. The [2Fe-2S] cluster site is built by C69, C75, C78, and C110. Residues 129–269 (VKKWECEVIS…SGPFGEFFAK (141 aa)) enclose the FAD-binding FR-type domain.

It belongs to the NqrF family. As to quaternary structure, composed of six subunits; NqrA, NqrB, NqrC, NqrD, NqrE and NqrF. It depends on [2Fe-2S] cluster as a cofactor. FAD serves as cofactor.

The protein resides in the cell inner membrane. The enzyme catalyses a ubiquinone + n Na(+)(in) + NADH + H(+) = a ubiquinol + n Na(+)(out) + NAD(+). NQR complex catalyzes the reduction of ubiquinone-1 to ubiquinol by two successive reactions, coupled with the transport of Na(+) ions from the cytoplasm to the periplasm. The first step is catalyzed by NqrF, which accepts electrons from NADH and reduces ubiquinone-1 to ubisemiquinone by a one-electron transfer pathway. This Serratia proteamaculans (strain 568) protein is Na(+)-translocating NADH-quinone reductase subunit F.